Consider the following 154-residue polypeptide: Putative NADPH-dependent 7-cyano-7-deazaguanine reductase (154 aa).

Catalysis depends on D52, which acts as the Proton donor. Residues 67 to 69 (VES) and 86 to 87 (HE) each bind substrate.

It belongs to the GTP cyclohydrolase I family. QueF type 1 subfamily.

The protein localises to the cytoplasm. It carries out the reaction 7-aminomethyl-7-carbaguanine + 2 NADP(+) = 7-cyano-7-deazaguanine + 2 NADPH + 3 H(+). The protein operates within tRNA modification; tRNA-queuosine biosynthesis. Catalyzes the NADPH-dependent reduction of 7-cyano-7-deazaguanine (preQ0) to 7-aminomethyl-7-deazaguanine (preQ1). The chain is Putative NADPH-dependent 7-cyano-7-deazaguanine reductase from Streptococcus pneumoniae serotype 4 (strain ATCC BAA-334 / TIGR4).